We begin with the raw amino-acid sequence, 401 residues long: Subtilisin-like protease 7 (401 aa).

The first 20 residues, 1–20, serve as a signal peptide directing secretion; the sequence is MGFITKAIPLALAAASVING. Residues 21 to 119 constitute a propeptide that is removed on maturation; that stretch reads AEILETRAGV…IERDARVQIN (99 aa). One can recognise an Inhibitor I9 domain in the interval 36 to 118; it reads KYIVVMNDGM…YIERDARVQI (83 aa). The N-linked (GlcNAc...) asparagine glycan is linked to Asn-58. The 273-residue stretch at 129 to 401 folds into the Peptidase S8 domain; that stretch reads SWGLARVGSR…SKLINNGSGM (273 aa). Residues Asp-161 and His-193 each act as charge relay system in the active site. Asn-223 and Asn-253 each carry an N-linked (GlcNAc...) asparagine glycan. The Charge relay system role is filled by Ser-347. Asn-397 carries an N-linked (GlcNAc...) asparagine glycan.

The protein belongs to the peptidase S8 family.

The protein localises to the secreted. Its function is as follows. Secreted subtilisin-like serine protease with keratinolytic activity that contributes to pathogenicity. In Trichophyton tonsurans (Scalp ringworm fungus), this protein is Subtilisin-like protease 7 (SUB7).